A 342-amino-acid chain; its full sequence is Dihydroorotase (342 aa).

Residues His-13 and His-15 each coordinate Zn(2+). Substrate-binding positions include 15–17 (HLR) and Asn-41. Zn(2+) contacts are provided by Lys-98, His-135, and His-173. At Lys-98 the chain carries N6-carboxylysine. His-135 is a binding site for substrate. Residue Leu-218 participates in substrate binding. Position 246 (Asp-246) interacts with Zn(2+). The active site involves Asp-246. Substrate-binding residues include His-250 and Ala-262.

Belongs to the metallo-dependent hydrolases superfamily. DHOase family. Class II DHOase subfamily. In terms of assembly, homodimer. It depends on Zn(2+) as a cofactor.

It catalyses the reaction (S)-dihydroorotate + H2O = N-carbamoyl-L-aspartate + H(+). Its pathway is pyrimidine metabolism; UMP biosynthesis via de novo pathway; (S)-dihydroorotate from bicarbonate: step 3/3. Its function is as follows. Catalyzes the reversible cyclization of carbamoyl aspartate to dihydroorotate. The polypeptide is Dihydroorotase (Aliivibrio salmonicida (strain LFI1238) (Vibrio salmonicida (strain LFI1238))).